The primary structure comprises 187 residues: Peptide deformylase (187 aa).

Cys107 and His149 together coordinate Fe cation. Glu150 is an active-site residue. Residue His153 participates in Fe cation binding.

The protein belongs to the polypeptide deformylase family. It depends on Fe(2+) as a cofactor.

The enzyme catalyses N-terminal N-formyl-L-methionyl-[peptide] + H2O = N-terminal L-methionyl-[peptide] + formate. Its function is as follows. Removes the formyl group from the N-terminal Met of newly synthesized proteins. Requires at least a dipeptide for an efficient rate of reaction. N-terminal L-methionine is a prerequisite for activity but the enzyme has broad specificity at other positions. This chain is Peptide deformylase, found in Microchaete diplosiphon (Fremyella diplosiphon).